A 581-amino-acid polypeptide reads, in one-letter code: Serine/threonine protein phosphatase 2A 55 kDa regulatory subunit B alpha isoform (581 aa).

The tract at residues 1 to 27 is disordered; it reads MMNPDGGDGDRLEAAGAGSSSAQQGHP. Positions 14 to 25 are enriched in low complexity; sequence AAGAGSSSAQQG. WD repeat units lie at residues 47-86 and 123-164; these read QEVDIISAIEFDKSGDHLATGDRGGRVVLFERTDARDNAS and EIEE…VKQV. Low complexity predominate over residues 172 to 189; the sequence is RSVGTGTSSSASTSSSRG. The interval 172–192 is disordered; the sequence is RSVGTGTSSSASTSSSRGLLP. WD repeat units lie at residues 241-279, 290-330, 349-387, and 492-530; these read AHDYHINSISTNSDGETYISADDLRINLWNLEINNQSFN, DLTE…LCDN, EIIASISDIKFSRDGRYILSRDYMTLKLWDLNMDSGPVS, and DFSTKLLHLAWHPTENSIACAAANSLYMYYARRCLRKFI.

The protein belongs to the phosphatase 2A regulatory subunit B family. PP2A consists of a common heteromeric enzyme, composed of a catalytic subunit (subunits C), a constant regulatory subunit (subunit A), and a variety of regulatory subunits such as subunits B (the R2/B/PR55/B55, R3/B''/PR72/PR130/PR59 and R5/B'/B56 families).

The B regulatory subunit may modulate substrate selectivity and catalytic activity, and may also direct the localization of the catalytic enzyme to a particular subcellular compartment. The protein is Serine/threonine protein phosphatase 2A 55 kDa regulatory subunit B alpha isoform of Oryza sativa subsp. japonica (Rice).